We begin with the raw amino-acid sequence, 221 residues long: Uracil-DNA glycosylase 1 (221 aa).

Catalysis depends on aspartate 61, which acts as the Proton acceptor.

The protein belongs to the uracil-DNA glycosylase (UDG) superfamily. UNG family.

The protein localises to the cytoplasm. It catalyses the reaction Hydrolyzes single-stranded DNA or mismatched double-stranded DNA and polynucleotides, releasing free uracil.. In terms of biological role, excises uracil residues from the DNA which can arise as a result of misincorporation of dUMP residues by DNA polymerase or due to deamination of cytosine. The protein is Uracil-DNA glycosylase 1 of Listeria innocua serovar 6a (strain ATCC BAA-680 / CLIP 11262).